A 621-amino-acid chain; its full sequence is Solute carrier family 2, facilitated glucose transporter member 12 (621 aa).

Residues M1–S48 lie on the Cytoplasmic side of the membrane. Residues V49 to L69 form a helical membrane-spanning segment. Residues L70–E84 lie on the Extracellular side of the membrane. Residues M85 to I105 traverse the membrane as a helical segment. Over D106–C119 the chain is Cytoplasmic. The chain crosses the membrane as a helical span at residues L120–G140. R141 is a topological domain (extracellular). A helical transmembrane segment spans residues I142–I162. At A163–E176 the chain is on the cytoplasmic side. A helical membrane pass occupies residues L177–F197. Topologically, residues H198–K201 are extracellular. A helical transmembrane segment spans residues Y202 to P222. Topologically, residues P223–R282 are cytoplasmic. Residues I283–F303 form a helical membrane-spanning segment. Topologically, residues Y304 to S321 are extracellular. The helical transmembrane segment at L322–V342 threads the bilayer. Residues D343–T349 are Cytoplasmic-facing. The chain crosses the membrane as a helical span at residues F350 to L370. Over N371 to A470 the chain is Extracellular. N375, N387, N400, and N405 each carry an N-linked (GlcNAc...) asparagine glycan. The chain crosses the membrane as a helical span at residues S471–L491. The Cytoplasmic portion of the chain corresponds to S492 to R502. The chain crosses the membrane as a helical span at residues A503 to L523. Topologically, residues T524–P532 are extracellular. The helical transmembrane segment at W533–I553 threads the bilayer. Topologically, residues P554–N621 are cytoplasmic.

The protein belongs to the major facilitator superfamily. Sugar transporter (TC 2.A.1.1) family. Glucose transporter subfamily.

It is found in the cell membrane. Its subcellular location is the endomembrane system. The protein localises to the cytoplasm. The protein resides in the perinuclear region. The catalysed reaction is D-glucose(out) = D-glucose(in). Functionally, insulin-independent facilitative glucose transporter. The polypeptide is Solute carrier family 2, facilitated glucose transporter member 12 (Macaca fascicularis (Crab-eating macaque)).